A 392-amino-acid polypeptide reads, in one-letter code: DNA-directed RNA polymerase subunit Rpo1C (392 aa).

This sequence belongs to the RNA polymerase beta' chain family. In terms of assembly, part of the RNA polymerase complex.

The protein resides in the cytoplasm. It carries out the reaction RNA(n) + a ribonucleoside 5'-triphosphate = RNA(n+1) + diphosphate. In terms of biological role, DNA-dependent RNA polymerase (RNAP) catalyzes the transcription of DNA into RNA using the four ribonucleoside triphosphates as substrates. Forms part of the jaw domain. The polypeptide is DNA-directed RNA polymerase subunit Rpo1C (Sulfurisphaera tokodaii (strain DSM 16993 / JCM 10545 / NBRC 100140 / 7) (Sulfolobus tokodaii)).